We begin with the raw amino-acid sequence, 487 residues long: Protein translocase subunit SecY (487 aa).

Over 1–20 (MSWKDTAEPLLVRMPAVQRP) the chain is Cytoplasmic. Residues 21 to 47 (EGHVPFKRKLTWTGGVLLLYFFLTNVK) traverse the membrane as a helical segment. The Extracellular portion of the chain corresponds to 48 to 59 (LFGLDIDASQQV). Residues 60 to 67 (FGRFSSIL) constitute an intramembrane region (helical). Residues 60–88 (FGRFSSILASGQGSIMQLGIGPIVTASIV) form a discontinuously helical membrane-spanning segment. An intramembrane segment occupies 68–79 (ASGQGSIMQLGI). Residues 80-88 (GPIVTASIV) constitute an intramembrane region (helical). At 89–110 (LQLLGGADLLGLNTQDDPRDQI) the chain is on the cytoplasmic side. Residues 111–135 (LYQGLQKLLVLVMICLTGLPMVFAG) traverse the membrane as a helical segment. Residues 136-153 (GFLPADTAVANSLGIGTA) are Extracellular-facing. The helical transmembrane segment at 154–178 (GVQWLIFAQMFVGGVLILFMDEVIS) threads the bilayer. Over 179-184 (KWGVGS) the chain is Cytoplasmic. A helical transmembrane segment spans residues 185 to 203 (GIGLFIVAGVSQRLVGGLL). Residues 204–244 (TAPFLGNSEGIIYTWYLFITGERGTGPVLAADGLQTVLLQG) are Extracellular-facing. Residues 245 to 266 (ELLGLFTTVLIFAVVVYAESVR) traverse the membrane as a helical segment. Residues 267–291 (VEIPLSNARVKGARGRFPVKLIYAS) lie on the Cytoplasmic side of the membrane. A helical membrane pass occupies residues 292–313 (VLPMILVRALQANIQFLGRILN). The Extracellular segment spans residues 314 to 364 (AQLGSMPAFLGTYANGQPTGGLFYFLAPIQSRGDWMWWLEGTAQPVWQILT). A helical membrane pass occupies residues 365–384 (RVGIDLFVMLVGGAVFAVFW). The Cytoplasmic portion of the chain corresponds to 385–427 (VETTDMGPEATAKQIHNSGMQIPGFRQNVGVIEKVLERYIPQV). The helical transmembrane segment at 428-446 (TVIGGALVGLLAVMANMLG) threads the bilayer. At 447-451 (TIGGV) the chain is on the extracellular side. Residues 452 to 466 (SGTGLLLTVSITYKL) traverse the membrane as a helical segment. Residues 467 to 487 (YEEIAEEQLMEMHPMMRQMFG) are Cytoplasmic-facing.

It belongs to the SecY/SEC61-alpha family. As to quaternary structure, component of the Sec protein translocase complex. Heterotrimer consisting of alpha (SecY), beta (SecG) and gamma (SecE) subunits. The heterotrimers can form oligomers, although 1 heterotrimer is thought to be able to translocate proteins. Interacts with the ribosome. May interact with SecDF, and other proteins may be involved.

It localises to the cell membrane. In terms of biological role, the central subunit of the protein translocation channel SecYEG. Consists of two halves formed by TMs 1-5 and 6-10. These two domains form a lateral gate at the front which open onto the bilayer between TMs 2 and 7, and are clamped together by SecE at the back. The channel is closed by both a pore ring composed of hydrophobic SecY resides and a short helix (helix 2A) on the extracellular side of the membrane which forms a plug. The plug probably moves laterally to allow the channel to open. The ring and the pore may move independently. The sequence is that of Protein translocase subunit SecY from Haloarcula marismortui (strain ATCC 43049 / DSM 3752 / JCM 8966 / VKM B-1809) (Halobacterium marismortui).